Consider the following 456-residue polypeptide: Histidine--tRNA ligase (456 aa).

This sequence belongs to the class-II aminoacyl-tRNA synthetase family. In terms of assembly, homodimer.

Its subcellular location is the cytoplasm. The enzyme catalyses tRNA(His) + L-histidine + ATP = L-histidyl-tRNA(His) + AMP + diphosphate + H(+). The protein is Histidine--tRNA ligase of Cupriavidus taiwanensis (strain DSM 17343 / BCRC 17206 / CCUG 44338 / CIP 107171 / LMG 19424 / R1) (Ralstonia taiwanensis (strain LMG 19424)).